Consider the following 175-residue polypeptide: Co-chaperone protein HscB homolog (175 aa).

Residues 2–74 (NYFQLFNIEV…LQRAEYILVQ (73 aa)) enclose the J domain.

It belongs to the HscB family. In terms of assembly, interacts with HscA and stimulates its ATPase activity.

Functionally, co-chaperone involved in the maturation of iron-sulfur cluster-containing proteins. Seems to help targeting proteins to be folded toward HscA. This Colwellia psychrerythraea (strain 34H / ATCC BAA-681) (Vibrio psychroerythus) protein is Co-chaperone protein HscB homolog.